The following is a 139-amino-acid chain: Centromere protein S (139 aa).

Residues 99–139 (ELASSNMEQKEKKKKKSSAAKGRKTEENETPVTESEDSNMA) are disordered. Residues 110 to 120 (KKKKKSSAAKG) are compositionally biased toward basic residues.

Belongs to the TAF9 family. CENP-S/MHF1 subfamily. Heterodimer with CENPX, sometimes called MHF; this interaction stabilizes both partners. MHF heterodimers can assemble to form tetrameric structures. MHF also coassemble with CENPT-CENPW heterodimers at centromeres to form the tetrameric CENP-T-W-S-X complex. Forms a discrete complex with FANCM and CENPX, called FANCM-MHF; this interaction, probably mediated by direct binding between CENPS and FANCM, leads to synergistic activation of double-stranded DNA binding and strongly stimulates FANCM-mediated DNA remodeling. Recruited by FANCM to the Fanconi anemia (FA) core complex, which consists of CENPS, CENPX, FANCA, FANCB, FANCC, FANCE, FANCF, FANCG, FANCL, FANCM, FAAP24 and FAAP100. The FA core complex associates with Bloom syndrome (BLM) complex, which consists of at least BLM, DNA topoisomerase 3-alpha (TOP3A), RMI1/BLAP75, RPA1/RPA70 and RPA2/RPA32. The super complex between FA and BLM is called BRAFT. Component of the CENPA-CAD complex, composed of CENPI, CENPK, CENPL, CENPO, CENPP, CENPQ, CENPR and CENPS. The CENPA-CAD complex is probably recruited on centromeres by the CENPA-NAC complex, at least composed of CENPA, CENPC, CENPH, CENPM, CENPN, CENPT and CENPU.

The protein resides in the nucleus. It localises to the chromosome. The protein localises to the centromere. Its subcellular location is the kinetochore. DNA-binding component of the Fanconi anemia (FA) core complex. Required for the normal activation of the FA pathway, leading to monoubiquitination of the FANCI-FANCD2 complex in response to DNA damage, cellular resistance to DNA cross-linking drugs, and prevention of chromosomal breakage. In complex with CENPX (MHF heterodimer), crucial cofactor for FANCM in both binding and ATP-dependent remodeling of DNA. Stabilizes FANCM. In complex with CENPX and FANCM (but not other FANC proteins), rapidly recruited to blocked forks and promotes gene conversion at blocked replication forks. In complex with CENPT, CENPW and CENPX (CENP-T-W-S-X heterotetramer), involved in the formation of a functional kinetochore outer plate, which is essential for kinetochore-microtubule attachment and faithful mitotic progression. As a component of MHF and CENP-T-W-S-X complexes, binds DNA and bends it to form a nucleosome-like structure. DNA-binding function is fulfilled in the presence of CENPX, with the following preference for DNA substates: Holliday junction &gt; double-stranded &gt; splay arm &gt; single-stranded. Does not bind DNA on its own. The sequence is that of Centromere protein S (CENPS) from Gallus gallus (Chicken).